Reading from the N-terminus, the 278-residue chain is Putative peptidase Cgl1093 (278 aa).

The signal sequence occupies residues 1-32; it reads MSSASFTTKALSVLAALTAASAPLVAASPAHA. One can recognise a Peptidase S1 domain in the interval 33–236; the sequence is LANARNVTGS…HAEWIAYYTG (204 aa). Cys59 and Cys75 are joined by a disulfide. Active-site charge relay system residues include His74, Asp123, and Ser189.

Belongs to the peptidase S1 family.

The protein resides in the secreted. The polypeptide is Putative peptidase Cgl1093 (Corynebacterium glutamicum (strain ATCC 13032 / DSM 20300 / JCM 1318 / BCRC 11384 / CCUG 27702 / LMG 3730 / NBRC 12168 / NCIMB 10025 / NRRL B-2784 / 534)).